Here is a 74-residue protein sequence, read N- to C-terminus: Omega-conotoxin-like PuIIA (74 aa).

The N-terminal stretch at 1-22 (MKLTCVVIVAVLFLTACQLITA) is a signal peptide. A propeptide spanning residues 23–46 (ETYSRGEQKHRALSSTDKNSKLTR) is cleaved from the precursor. 3 disulfides stabilise this stretch: cysteine 48–cysteine 62, cysteine 55–cysteine 66, and cysteine 61–cysteine 73.

This sequence belongs to the conotoxin O1 superfamily. As to expression, expressed by the venom duct.

The protein localises to the secreted. Omega-conotoxins act at presynaptic membranes, they bind and block voltage-gated calcium channels (Cav). This chain is Omega-conotoxin-like PuIIA, found in Conus pulicarius (Flea-bitten cone).